Consider the following 248-residue polypeptide: 7-cyano-7-deazaguanine synthase (248 aa).

22-32 (LSGGLDSTTCL) serves as a coordination point for ATP. 4 residues coordinate Zn(2+): Cys216, Cys225, Cys228, and Cys231.

The protein belongs to the QueC family. Requires Zn(2+) as cofactor.

It carries out the reaction 7-carboxy-7-deazaguanine + NH4(+) + ATP = 7-cyano-7-deazaguanine + ADP + phosphate + H2O + H(+). Its pathway is purine metabolism; 7-cyano-7-deazaguanine biosynthesis. Its function is as follows. Catalyzes the ATP-dependent conversion of 7-carboxy-7-deazaguanine (CDG) to 7-cyano-7-deazaguanine (preQ(0)). This Leptospira biflexa serovar Patoc (strain Patoc 1 / Ames) protein is 7-cyano-7-deazaguanine synthase.